Consider the following 668-residue polypeptide: Glucan endo-1,3-beta-D-glucosidase (668 aa).

Positions 2–208 (VNIQTNTSYI…SGIIRIALLP (207 aa)) are beta-sandwich subdomain. A GH81 domain is found at 2 to 668 (VNIQTNTSYI…LWWIHSRSDE (667 aa)). 4 N-linked (GlcNAc...) asparagine glycosylation sites follow: Asn65, Asn124, Asn160, and Asn187. The tract at residues 209-299 (DSDSKHEAVL…GDSWVLKTDP (91 aa)) is alpha/beta subdomain. Residues 240-443 (EYNWEKKDSG…TKLDPAWGRK (204 aa)) are involved in beta-glucan binding. Residues 309–668 (GIKEESHDEI…LWWIHSRSDE (360 aa)) are (alpha/beta)6 barrel subdomain. Asp418 is an active-site residue. His422 lines the (1,3-beta-D-glucosyl)n pocket. Residue Asn465 is glycosylated (N-linked (GlcNAc...) asparagine). Active-site residues include Glu494 and Glu498. (1,3-beta-D-glucosyl)n-binding residues include Glu494 and Glu498. Positions 564 to 566 (KRD) are may provide specificity for triple-helical beta-glucan.

This sequence belongs to the glycosyl hydrolase 81 family. As to expression, expressed in roots (at protein level). Expressed in leaves.

Its subcellular location is the secreted. It localises to the cell wall. The enzyme catalyses Hydrolysis of (1-&gt;3)-beta-D-glucosidic linkages in (1-&gt;3)-beta-D-glucans.. Its function is as follows. Cleaves internal linkages in 1,3-beta-glucan. Beta-glucan, a polysaccharide constituent of fungal cell walls, can act as an elicitor in the plant, triggering defense responses including phytoalexin synthesis. This Glycine max (Soybean) protein is Glucan endo-1,3-beta-D-glucosidase.